Here is a 130-residue protein sequence, read N- to C-terminus: Protein PELPK2 (130 aa).

The N-terminal stretch at 1-32 is a signal peptide; it reads MTLKKSFSASLLSPFLIICLIALLSVPVSVGA. Repeat copies occupy residues 47 to 51, 52 to 56, 58 to 62, 63 to 67, 69 to 73, 74 to 78, 80 to 84, 91 to 95, 97 to 101, 102 to 106, 108 to 112, 113 to 117, and 121 to 125. A 13 X 5 AA tandem repeat of P-[DEGQ]-[AEFLIV]-[QPT]-K region spans residues 47–125; the sequence is PELPKPEMPK…TKVPAFTMPK (79 aa). Basic and acidic residues predominate over residues 71–84; the sequence is IPKPEMPKLPEIQK. The interval 71–130 is disordered; that stretch reads IPKPEMPKLPEIQKPELPTFPELPKMPEFPKFDFPKLPELPKPEETKVPAFTMPKFPGSP. Residues 98–117 show a composition bias toward basic and acidic residues; the sequence is EFPKFDFPKLPELPKPEETK.

Its subcellular location is the secreted. The protein resides in the cell wall. The sequence is that of Protein PELPK2 from Arabidopsis thaliana (Mouse-ear cress).